Reading from the N-terminus, the 269-residue chain is Formamidopyrimidine-DNA glycosylase (269 aa).

P2 acts as the Schiff-base intermediate with DNA in catalysis. Residue E3 is the Proton donor of the active site. K57 serves as the catalytic Proton donor; for beta-elimination activity. DNA contacts are provided by H90, R109, and K150. Residues 235-269 (QVYGKAGEPCPECGEAIQEQKIGQRNTFYCSYCQC) form an FPG-type zinc finger. R259 functions as the Proton donor; for delta-elimination activity in the catalytic mechanism.

It belongs to the FPG family. In terms of assembly, monomer. Requires Zn(2+) as cofactor.

The enzyme catalyses Hydrolysis of DNA containing ring-opened 7-methylguanine residues, releasing 2,6-diamino-4-hydroxy-5-(N-methyl)formamidopyrimidine.. It catalyses the reaction 2'-deoxyribonucleotide-(2'-deoxyribose 5'-phosphate)-2'-deoxyribonucleotide-DNA = a 3'-end 2'-deoxyribonucleotide-(2,3-dehydro-2,3-deoxyribose 5'-phosphate)-DNA + a 5'-end 5'-phospho-2'-deoxyribonucleoside-DNA + H(+). Its function is as follows. Involved in base excision repair of DNA damaged by oxidation or by mutagenic agents. Acts as a DNA glycosylase that recognizes and removes damaged bases. Has a preference for oxidized purines, such as 7,8-dihydro-8-oxoguanine (8-oxoG). Has AP (apurinic/apyrimidinic) lyase activity and introduces nicks in the DNA strand. Cleaves the DNA backbone by beta-delta elimination to generate a single-strand break at the site of the removed base with both 3'- and 5'-phosphates. The protein is Formamidopyrimidine-DNA glycosylase of Vibrio vulnificus (strain CMCP6).